We begin with the raw amino-acid sequence, 366 residues long: Aminomethyltransferase (366 aa).

It belongs to the GcvT family. In terms of assembly, the glycine cleavage system is composed of four proteins: P, T, L and H.

It carries out the reaction N(6)-[(R)-S(8)-aminomethyldihydrolipoyl]-L-lysyl-[protein] + (6S)-5,6,7,8-tetrahydrofolate = N(6)-[(R)-dihydrolipoyl]-L-lysyl-[protein] + (6R)-5,10-methylene-5,6,7,8-tetrahydrofolate + NH4(+). In terms of biological role, the glycine cleavage system catalyzes the degradation of glycine. The protein is Aminomethyltransferase of Sodalis glossinidius (strain morsitans).